Here is a 276-residue protein sequence, read N- to C-terminus: F420-dependent methylenetetrahydromethanopterin dehydrogenase (276 aa).

Belongs to the MTD family.

The catalysed reaction is 5,10-methylenetetrahydromethanopterin + oxidized coenzyme F420-(gamma-L-Glu)(n) + 2 H(+) = 5,10-methenyl-5,6,7,8-tetrahydromethanopterin + reduced coenzyme F420-(gamma-L-Glu)(n). Catalyzes the oxidation of methylene-H(4)MPT to methenyl-H(4)MPT(+). The chain is F420-dependent methylenetetrahydromethanopterin dehydrogenase from Methanosphaera stadtmanae (strain ATCC 43021 / DSM 3091 / JCM 11832 / MCB-3).